Consider the following 113-residue polypeptide: uncharacterized protein (113 aa).

Disordered stretches follow at residues 1-22 (MGEHAIKRHMRQRKPTKHPLAQ) and 90-113 (DGRHTTESSFEHSSPSRSPQSDDL). The span at 90 to 99 (DGRHTTESSF) shows a compositional bias: basic and acidic residues. Positions 100–113 (EHSSPSRSPQSDDL) are enriched in low complexity.

This is an uncharacterized protein from Mycobacterium tuberculosis (strain ATCC 25618 / H37Rv).